The following is a 150-amino-acid chain: Ribosomal RNA large subunit methyltransferase H (150 aa).

S-adenosyl-L-methionine is bound by residues alanine 100 and 118–123 (LSEMTF).

This sequence belongs to the RNA methyltransferase RlmH family. Homodimer.

The protein localises to the cytoplasm. The enzyme catalyses pseudouridine(1915) in 23S rRNA + S-adenosyl-L-methionine = N(3)-methylpseudouridine(1915) in 23S rRNA + S-adenosyl-L-homocysteine + H(+). Functionally, specifically methylates the pseudouridine at position 1915 (m3Psi1915) in 23S rRNA. The chain is Ribosomal RNA large subunit methyltransferase H from Helicobacter pylori (strain P12).